A 620-amino-acid polypeptide reads, in one-letter code: Chaperone protein HscA homolog (620 aa).

This sequence belongs to the heat shock protein 70 family.

Chaperone involved in the maturation of iron-sulfur cluster-containing proteins. Has a low intrinsic ATPase activity which is markedly stimulated by HscB. The protein is Chaperone protein HscA homolog of Pseudomonas entomophila (strain L48).